Consider the following 363-residue polypeptide: Peroxidase (363 aa).

A signal peptide spans 1–20 (MKLSLLSTFAAVIIGALALP). Gln-21 carries the pyrrolidone carboxylic acid modification. Intrachain disulfides connect Cys-31–Cys-43, Cys-42–Cys-312, Cys-62–Cys-148, and Cys-276–Cys-341. His-75 acts as the Proton acceptor in catalysis. Asp-76, Gly-94, Asp-96, and Ser-98 together coordinate Ca(2+). N-linked (GlcNAc...) (high mannose) asparagine glycosylation occurs at Asn-162. His-203 contacts heme b. Residues Ser-204, Asp-221, Thr-223, Val-226, and Asp-228 each contribute to the Ca(2+) site. O-linked (Man...) serine glycosylation occurs at Ser-358.

This sequence belongs to the peroxidase family. Ligninase subfamily. Ca(2+) is required as a cofactor. It depends on heme b as a cofactor.

The protein resides in the secreted. It catalyses the reaction 2 a phenolic donor + H2O2 = 2 a phenolic radical donor + 2 H2O. This chain is Peroxidase (CIP1), found in Coprinopsis cinerea (strain Okayama-7 / 130 / ATCC MYA-4618 / FGSC 9003) (Inky cap fungus).